An 85-amino-acid chain; its full sequence is Toxin To9 (85 aa).

An N-terminal signal peptide occupies residues 1-19 (MNYSTLIAVASLLTAGTES). Positions 21-81 (KDGYPVKEGD…AAIKGYGRCR (61 aa)) constitute an LCN-type CS-alpha/beta domain. Disulfide bonds link C31/C80, C35/C56, C42/C63, and C46/C65. Position 82 is a proline amide (P82).

This sequence belongs to the long (4 C-C) scorpion toxin superfamily. Sodium channel inhibitor family. Alpha subfamily. As to expression, expressed by the venom gland.

The protein localises to the secreted. In terms of biological role, alpha toxins bind voltage-independently at site-3 of sodium channels (Nav) and inhibit the inactivation of the activated channels, thereby blocking neuronal transmission. This is Toxin To9 from Tityus obscurus (Amazonian scorpion).